The primary structure comprises 97 residues: Small cell adhesion glycoprotein (97 aa).

Residues 1-36 (MNNLPATPSPEELMTTPVFQAPETLSPQAEEASTAL) are Extracellular-facing. Thr7 carries an O-linked (GalNAc...) threonine glycan. Residue Ser9 is glycosylated (O-linked (GalNAc...) serine). Residues Thr15, Thr16, and Thr24 are each glycosylated (O-linked (GalNAc...) threonine). The O-linked (GalNAc...) serine glycan is linked to Ser26. The helical; Signal-anchor for type III membrane protein transmembrane segment at 37–57 (IAVVITVVFLTLLSVVTLIFF) threads the bilayer. Topologically, residues 58–97 (HLYKNKGSYVTYEPAEGEPSAILQMETDSAKGREKEEYFI) are cytoplasmic.

The protein belongs to the SMAGP family. In terms of processing, O-glycosylated. The O-glycan is modified with sialic acid residues.

Its subcellular location is the cell membrane. It is found in the cytoplasmic vesicle membrane. In terms of biological role, may play a role in epithelial cell-cell contacts. May play a role in tumor invasiveness and metastasis formation. This Mus musculus (Mouse) protein is Small cell adhesion glycoprotein (Smagp).